Consider the following 322-residue polypeptide: Homoserine kinase (322 aa).

Belongs to the pseudomonas-type ThrB family.

The enzyme catalyses L-homoserine + ATP = O-phospho-L-homoserine + ADP + H(+). The protein operates within amino-acid biosynthesis; L-threonine biosynthesis; L-threonine from L-aspartate: step 4/5. The protein is Homoserine kinase of Agrobacterium fabrum (strain C58 / ATCC 33970) (Agrobacterium tumefaciens (strain C58)).